The sequence spans 463 residues: Elongation factor 1-alpha 1 (463 aa).

Residues 5–242 (KIHINIVVIG…DAILPPARPT (238 aa)) enclose the tr-type G domain. Residues 14-21 (GHVDSGKS) are G1. Position 14-21 (14-21 (GHVDSGKS)) interacts with GTP. Residues 70 to 74 (GITID) are G2. The segment at 91–94 (DAPG) is G3. Residues 91–95 (DAPGH) and 153–156 (NKMD) contribute to the GTP site. The tract at residues 153-156 (NKMD) is G4. The G5 stretch occupies residues 194–196 (SGW). 2 positions are modified to 5-glutamyl glycerylphosphorylethanolamine: E301 and E374.

The protein belongs to the TRAFAC class translation factor GTPase superfamily. Classic translation factor GTPase family. EF-Tu/EF-1A subfamily.

The protein localises to the cytoplasm. Functionally, this protein promotes the GTP-dependent binding of aminoacyl-tRNA to the A-site of ribosomes during protein biosynthesis. This Drosophila melanogaster (Fruit fly) protein is Elongation factor 1-alpha 1.